The primary structure comprises 353 residues: UPF0283 membrane protein YpsIP31758_1791 (353 aa).

Transmembrane regions (helical) follow at residues 71 to 91, 101 to 121, and 214 to 234; these read MVTA…VQWV, IALG…GSVV, and ESAL…FIAW.

This sequence belongs to the UPF0283 family.

It localises to the cell inner membrane. This Yersinia pseudotuberculosis serotype O:1b (strain IP 31758) protein is UPF0283 membrane protein YpsIP31758_1791.